The primary structure comprises 409 residues: MNKLNFVILCLAALLVFDATAQQDVHGPFQGQRQNEFDLMFVKEIFKNHNSNVVLSPFSVKILLTLIYEASDTSFGNAVSNTKRELSSVIQNDNIDHTRSYYKQLLESAQQDNKDYDLNIATNFFVDDFIEVINKYQQIANTHYHAMLEKVSYSNPTQTAATINNWVSEHTNGRLREIVTPDSLEGAVITLVNVIYFKGLWTYPFPEVANNVKPFYGTRGKPTNAQYMEQNGQFYYDNSADLGAQILRLPYRGNKLAMYFILPNPDNTVNQVLDRINSASLHQALWYMEENEVNVTLPKFKFDFSEQLNEPLQQVGIREIFSQNASLPLLARGRGARDEVRVSRIFQKAGITINELGSEAYAATEIQLVNKFGGDGVQIFNANRPFIFFIEDETLGTMLFAGKIENPVF.

The signal sequence occupies residues 1–21 (MNKLNFVILCLAALLVFDATA). N-linked (GlcNAc...) asparagine glycosylation is found at N294 and N324. The Hinge region; required for binding to peptidase signature appears at 356 to 360 (LGSEA).

Belongs to the serpin family. In terms of assembly, forms a covalent heterodimer with protease CLIPB9; the interaction inhibits CLIPB9 protease activity. Forms a covalent heterodimer with protease CLIPB10; the interaction inhibits CLIPB10 catalytic activity. Interacts with CLIPB4 in the hemolymph of immune-challenged female mosquitoes; the interaction results in CLIPB4 inhibition. Protease CLIPB9 binds to SRPN2 via the hinge region resulting in the cleavage of the reactive bond. This leads to a conformational change in SRPN2 which traps CLIPB9 and distorts its active site, resulting in CLIPB9 inactivation.

Its subcellular location is the secreted. Serine protease inhibitor that functions in the melanization-mediated immune response. By preventing the activation of phenoloxidases through the inhibiting of serine proteases CLIPB9, CLIPB10 and CLIPB4, negatively regulates melanization in the hemolymph. By preventing melanization, has a detrimental role during P.berghei parasite mediated-infection and invasion of the mosquito midgut. The sequence is that of Serine protease inhibitor 2 from Anopheles gambiae (African malaria mosquito).